Reading from the N-terminus, the 189-residue chain is Thymidine kinase (189 aa).

ATP contacts are provided by residues Gly-9–Thr-16 and Asp-85–Gln-88. Glu-86 acts as the Proton acceptor in catalysis. Cys-143, Cys-146, Cys-180, and His-183 together coordinate Zn(2+).

Belongs to the thymidine kinase family. In terms of assembly, homotetramer.

It is found in the cytoplasm. The catalysed reaction is thymidine + ATP = dTMP + ADP + H(+). This Streptococcus pyogenes serotype M1 protein is Thymidine kinase.